The sequence spans 977 residues: MMNNQSMVRYQDGSYDFGSSPSPPVYSPIYRSPPPPPQPMYGTLPQYPRFLDNSHHQVMDNSDHEQQQQHHHHQQQQQQQQHHHQQQQQQQHHQQQQQQHHQQQQQHHHQQQQQQQQQLDKSYAPSNIVSELQRKIQFLEEEISRKRDTIEGLQSQVAKYEQEKQSEKKKQSRYWTPEEHSRFIEALSKYGHKDVKSISQYVSTRNPTQVRTHAQKYFLRIDRERGRKLESKESINGGADKDDDWLREEYNDEGSPTQYSSCSNSPTTNSVANPFSNSLIISSNNNNNSNSSNNNNNNNNNNNNNNNNNNININGSSGSNSNVNSGNSSPLIKRKREAVTITATQAKSALLYKDAVLAILPTSWTPSDYEQFSKGLISNIDQDDIHSLCKLIKENFLPMQSMENIESAYHAFQKAVLKQKDINNNNNNNNNNNNINNNNNNNINNNNSNNNNNNNNTNNNNNNNNNNNNTNNNNNNNNNNNNNSSNINNNNMNNSINNNNINNNGPNSPNLLSSQPQQINQQIIQQQLLNNNNNQNSNQNNNNNNNNNNNNIINNNNNNNNNSSNNNSNNNNNINNNNNSNNNNNGNNNSNNNNNNNNNNNNNNNNINNNNNNNNGNNINNNNNNNNNSSNQIIQQQQQVQQQQMQQQQMMMQNQIIPTLPMPSPQSQVLQSQFQPQQQMQQQMQMQYQQQQQQQQQQQQQQQQQQQQQQQQQQQQQQQQQQQQQQQQQQQQIYQQNLNSNSGNSSPNISSINGDFVRSPNYNNKKRPPPVNVSRPEFPVTPLSGSPSHSPAQSPHYNLNNGNNNNGNGSSNSSSYSGNQSPLGLVPSPSLSLHPPSPLITSPTSHSIRWPGPLNNTLMYDYRRMEPSHGINYVPLQQSPHAPPQQSPHFNNNSNNNNNNSNNNSNNSNNNSSGSSGINISDLNNSSDENNNSSNNSSNGSGSWHQYQATDSPTGWGMNQTITAFSNTSLSINNSQS.

A disordered region spans residues 1–122 (MMNNQSMVRY…QQQQQQLDKS (122 aa)). The span at 21–39 (PSPPVYSPIYRSPPPPPQP) shows a compositional bias: pro residues. Residues 52 to 68 (DNSHHQVMDNSDHEQQQ) show a composition bias toward basic and acidic residues. The segment covering 75-118 (QQQQQQQHHHQQQQQQQHHQQQQQQHHQQQQQHHHQQQQQQQQQ) has biased composition (low complexity). Positions 167 to 222 (EKKKQSRYWTPEEHSRFIEALSKYGHKDVKSISQYVSTRNPTQVRTHAQKYFLRID) constitute an HTH myb-type domain. A DNA-binding region (H-T-H motif) is located at residues 195–218 (VKSISQYVSTRNPTQVRTHAQKYF). Disordered regions lie at residues 229–331 (LESK…SSPL), 422–516 (INNN…SSQP), 531–650 (NNNN…QQQM), 738–853 (LNSN…WPGP), and 872–960 (NYVP…GMNQ). Residues 241–252 (KDDDWLREEYND) show a composition bias toward acidic residues. Polar residues predominate over residues 254–275 (GSPTQYSSCSNSPTTNSVANPF). Low complexity-rich tracts occupy residues 276-329 (SNSL…GNSS) and 422-504 (INNN…INNN). The span at 505–516 (GPNSPNLLSSQP) shows a compositional bias: polar residues. The segment covering 738 to 754 (LNSNSGNSSPNISSING) has biased composition (low complexity). The span at 783-797 (LSGSPSHSPAQSPHY) shows a compositional bias: polar residues. Composition is skewed to low complexity over residues 798–848 (NLNN…SHSI) and 887–943 (SPHF…GSGS). Positions 944–960 (WHQYQATDSPTGWGMNQ) are enriched in polar residues.

It is found in the nucleus. In Dictyostelium discoideum (Social amoeba), this protein is Myb-like protein I (mybI).